Reading from the N-terminus, the 264-residue chain is Tritrans,polycis-undecaprenyl-diphosphate synthase (geranylgeranyl-diphosphate specific) (264 aa).

The active site involves Asp43. Position 43 (Asp43) interacts with Mg(2+). Substrate contacts are provided by residues 44-47 (GNRR), Trp48, His60, and 88-90 (STE). Catalysis depends on Asn91, which acts as the Proton acceptor. Substrate is bound by residues Phe92, Arg94, Arg213, and 219-221 (RIS). A Mg(2+)-binding site is contributed by Glu232.

It belongs to the UPP synthase family. Homodimer. It depends on Mg(2+) as a cofactor.

It catalyses the reaction geranylgeranyl diphosphate + 7 isopentenyl diphosphate = tri-trans,hepta-cis-undecaprenyl diphosphate + 7 diphosphate. Functionally, catalyzes the sequential condensation of isopentenyl diphosphate (IPP) with geranylgeranyl diphosphate (GGPP) to yield (2Z,6Z,10Z,14Z,18Z,22Z,26Z,30E,34E,38E)-undecaprenyl diphosphate (tritrans,heptacis-UPP). It is probably the precursor of glycosyl carrier lipids. The sequence is that of Tritrans,polycis-undecaprenyl-diphosphate synthase (geranylgeranyl-diphosphate specific) from Thermococcus kodakarensis (strain ATCC BAA-918 / JCM 12380 / KOD1) (Pyrococcus kodakaraensis (strain KOD1)).